The following is a 718-amino-acid chain: Phenylalanine--tRNA ligase beta subunit (718 aa).

Residues 39–153 (LNEISGIKFG…IFDLESNPLK (115 aa)) enclose the tRNA-binding domain. The region spanning 386–460 (SKKTFLDLNY…RFYGLEKLKD (75 aa)) is the B5 domain. Positions 438, 444, and 448 each coordinate Mg(2+).

The protein belongs to the phenylalanyl-tRNA synthetase beta subunit family. Type 1 subfamily. Tetramer of two alpha and two beta subunits. Requires Mg(2+) as cofactor.

It localises to the cytoplasm. The catalysed reaction is tRNA(Phe) + L-phenylalanine + ATP = L-phenylalanyl-tRNA(Phe) + AMP + diphosphate + H(+). The protein is Phenylalanine--tRNA ligase beta subunit of Mesomycoplasma hyopneumoniae (strain 7448) (Mycoplasma hyopneumoniae).